A 319-amino-acid polypeptide reads, in one-letter code: ATP-dependent 6-phosphofructokinase (319 aa).

Glycine 11 serves as a coordination point for ATP. 21–25 (RAVTR) lines the ADP pocket. Residues 72 to 73 (RF) and 102 to 105 (GDGS) contribute to the ATP site. Position 103 (aspartate 103) interacts with Mg(2+). Residue 125-127 (SID) participates in substrate binding. Aspartate 127 (proton acceptor) is an active-site residue. Residue arginine 154 participates in ADP binding. Residues arginine 162 and 169 to 171 (MGR) contribute to the substrate site. Residues 185 to 187 (GAD) and 213 to 215 (KKH) contribute to the ADP site. Substrate is bound by residues glutamate 222, arginine 243, and 249–252 (HMQR).

It belongs to the phosphofructokinase type A (PFKA) family. ATP-dependent PFK group I subfamily. Prokaryotic clade 'B1' sub-subfamily. In terms of assembly, homotetramer. It depends on Mg(2+) as a cofactor.

It is found in the cytoplasm. The enzyme catalyses beta-D-fructose 6-phosphate + ATP = beta-D-fructose 1,6-bisphosphate + ADP + H(+). It participates in carbohydrate degradation; glycolysis; D-glyceraldehyde 3-phosphate and glycerone phosphate from D-glucose: step 3/4. Its activity is regulated as follows. Allosterically activated by ADP and other diphosphonucleosides, and allosterically inhibited by phosphoenolpyruvate. Its function is as follows. Catalyzes the phosphorylation of D-fructose 6-phosphate to fructose 1,6-bisphosphate by ATP, the first committing step of glycolysis. This is ATP-dependent 6-phosphofructokinase from Lactobacillus johnsonii (strain CNCM I-12250 / La1 / NCC 533).